A 201-amino-acid chain; its full sequence is Cytochrome c biogenesis ATP-binding export protein CcmA (201 aa).

Residues 3 to 200 (LIAENLGGER…EGAELRMGVA (198 aa)) form the ABC transporter domain. 35–42 (GPNGSGKS) serves as a coordination point for ATP.

Belongs to the ABC transporter superfamily. CcmA exporter (TC 3.A.1.107) family. In terms of assembly, the complex is composed of two ATP-binding proteins (CcmA) and two transmembrane proteins (CcmB).

Its subcellular location is the cell inner membrane. It carries out the reaction heme b(in) + ATP + H2O = heme b(out) + ADP + phosphate + H(+). Its function is as follows. Part of the ABC transporter complex CcmAB involved in the biogenesis of c-type cytochromes; once thought to export heme, this seems not to be the case, but its exact role is uncertain. Responsible for energy coupling to the transport system. The protein is Cytochrome c biogenesis ATP-binding export protein CcmA of Mesorhizobium japonicum (strain LMG 29417 / CECT 9101 / MAFF 303099) (Mesorhizobium loti (strain MAFF 303099)).